The primary structure comprises 167 residues: uncharacterized protein (167 aa).

This is an uncharacterized protein from Sus scrofa (Pig).